Consider the following 294-residue polypeptide: ATP synthase gamma chain (294 aa).

The protein belongs to the ATPase gamma chain family. In terms of assembly, F-type ATPases have 2 components, CF(1) - the catalytic core - and CF(0) - the membrane proton channel. CF(1) has five subunits: alpha(3), beta(3), gamma(1), delta(1), epsilon(1). CF(0) has three main subunits: a, b and c.

It localises to the cell inner membrane. Produces ATP from ADP in the presence of a proton gradient across the membrane. The gamma chain is believed to be important in regulating ATPase activity and the flow of protons through the CF(0) complex. The chain is ATP synthase gamma chain from Rhizorhabdus wittichii (strain DSM 6014 / CCUG 31198 / JCM 15750 / NBRC 105917 / EY 4224 / RW1) (Sphingomonas wittichii).